We begin with the raw amino-acid sequence, 588 residues long: Calicin (588 aa).

Residues 28 to 98 (WDIALTVDHH…FYSGKVVISE (71 aa)) enclose the BTB domain. Serine 149 is modified (phosphoserine). Kelch repeat units lie at residues 280 to 327 (SVVI…SAGR), 328 to 375 (YIYI…TCGG), 377 to 423 (VYSV…TRGD), 425 to 475 (NLYI…SFHQ), 476 to 525 (DNIL…VGDN), and 526 to 580 (KVFV…LAKL).

In terms of assembly, interacts with CYLC1; the interaction may be relevant for proper acrosome attachment to the nuclear envelope. As to expression, expressed in testis and in spermatozoa (at protein level).

Its subcellular location is the cytoplasm. It is found in the cytoskeleton. The protein localises to the perinuclear theca. The protein resides in the calyx. Its function is as follows. Required for both nuclear and acrosomal shaping during spermiogenesis. In Bos taurus (Bovine), this protein is Calicin (CCIN).